The primary structure comprises 230 residues: Large ribosomal subunit protein uL1 (230 aa).

Belongs to the universal ribosomal protein uL1 family. Part of the 50S ribosomal subunit.

Its function is as follows. Binds directly to 23S rRNA. The L1 stalk is quite mobile in the ribosome, and is involved in E site tRNA release. Functionally, protein L1 is also a translational repressor protein, it controls the translation of the L11 operon by binding to its mRNA. The sequence is that of Large ribosomal subunit protein uL1 from Bradyrhizobium sp. (strain ORS 278).